We begin with the raw amino-acid sequence, 211 residues long: Thiamine-phosphate synthase (211 aa).

Residues 37–41 and N69 each bind 4-amino-2-methyl-5-(diphosphooxymethyl)pyrimidine; that span reads QLRIK. Residues D70 and D89 each contribute to the Mg(2+) site. S108 contributes to the 4-amino-2-methyl-5-(diphosphooxymethyl)pyrimidine binding site. Position 134–136 (134–136) interacts with 2-[(2R,5Z)-2-carboxy-4-methylthiazol-5(2H)-ylidene]ethyl phosphate; the sequence is TQT. 4-amino-2-methyl-5-(diphosphooxymethyl)pyrimidine is bound at residue K137. 2-[(2R,5Z)-2-carboxy-4-methylthiazol-5(2H)-ylidene]ethyl phosphate is bound by residues G166 and 186–187; that span reads VS.

The protein belongs to the thiamine-phosphate synthase family. Requires Mg(2+) as cofactor.

It catalyses the reaction 2-[(2R,5Z)-2-carboxy-4-methylthiazol-5(2H)-ylidene]ethyl phosphate + 4-amino-2-methyl-5-(diphosphooxymethyl)pyrimidine + 2 H(+) = thiamine phosphate + CO2 + diphosphate. The catalysed reaction is 2-(2-carboxy-4-methylthiazol-5-yl)ethyl phosphate + 4-amino-2-methyl-5-(diphosphooxymethyl)pyrimidine + 2 H(+) = thiamine phosphate + CO2 + diphosphate. It carries out the reaction 4-methyl-5-(2-phosphooxyethyl)-thiazole + 4-amino-2-methyl-5-(diphosphooxymethyl)pyrimidine + H(+) = thiamine phosphate + diphosphate. It functions in the pathway cofactor biosynthesis; thiamine diphosphate biosynthesis; thiamine phosphate from 4-amino-2-methyl-5-diphosphomethylpyrimidine and 4-methyl-5-(2-phosphoethyl)-thiazole: step 1/1. Functionally, condenses 4-methyl-5-(beta-hydroxyethyl)thiazole monophosphate (THZ-P) and 2-methyl-4-amino-5-hydroxymethyl pyrimidine pyrophosphate (HMP-PP) to form thiamine monophosphate (TMP). In Escherichia coli O9:H4 (strain HS), this protein is Thiamine-phosphate synthase.